A 143-amino-acid polypeptide reads, in one-letter code: Large ribosomal subunit protein uL11 (143 aa).

Belongs to the universal ribosomal protein uL11 family. In terms of assembly, part of the ribosomal stalk of the 50S ribosomal subunit. Interacts with L10 and the large rRNA to form the base of the stalk. L10 forms an elongated spine to which L12 dimers bind in a sequential fashion forming a multimeric L10(L12)X complex. In terms of processing, one or more lysine residues are methylated.

Functionally, forms part of the ribosomal stalk which helps the ribosome interact with GTP-bound translation factors. The polypeptide is Large ribosomal subunit protein uL11 (Borreliella burgdorferi (strain ATCC 35210 / DSM 4680 / CIP 102532 / B31) (Borrelia burgdorferi)).